Here is a 523-residue protein sequence, read N- to C-terminus: Light-independent protochlorophyllide reductase subunit B (523 aa).

Residue Asp-36 participates in [4Fe-4S] cluster binding. Asp-290 functions as the Proton donor in the catalytic mechanism. Residue 425-426 participates in substrate binding; sequence GL.

Belongs to the ChlB/BchB/BchZ family. In terms of assembly, protochlorophyllide reductase is composed of three subunits; ChlL, ChlN and ChlB. Forms a heterotetramer of two ChlB and two ChlN subunits. The cofactor is [4Fe-4S] cluster.

The catalysed reaction is chlorophyllide a + oxidized 2[4Fe-4S]-[ferredoxin] + 2 ADP + 2 phosphate = protochlorophyllide a + reduced 2[4Fe-4S]-[ferredoxin] + 2 ATP + 2 H2O. It participates in porphyrin-containing compound metabolism; chlorophyll biosynthesis (light-independent). Component of the dark-operative protochlorophyllide reductase (DPOR) that uses Mg-ATP and reduced ferredoxin to reduce ring D of protochlorophyllide (Pchlide) to form chlorophyllide a (Chlide). This reaction is light-independent. The NB-protein (ChlN-ChlB) is the catalytic component of the complex. The sequence is that of Light-independent protochlorophyllide reductase subunit B from Prochlorococcus marinus (strain MIT 9301).